Reading from the N-terminus, the 199-residue chain is CASP-like protein 1D2 (199 aa).

The disordered stretch occupies residues Met1–Ser27. Ala2 is subject to N-acetylalanine. The Cytoplasmic portion of the chain corresponds to Ala2–Lys36. A helical transmembrane segment spans residues Ile37 to Val57. Residues Thr58–Ala85 lie on the Extracellular side of the membrane. A helical membrane pass occupies residues Phe86–Val106. The Cytoplasmic segment spans residues Ser107 to Met129. A helical membrane pass occupies residues Val130–Leu150. Residues Lys151 to Tyr171 are Extracellular-facing. The chain crosses the membrane as a helical span at residues Ile172–Trp192. Residues Ser193–Thr199 lie on the Cytoplasmic side of the membrane.

The protein belongs to the Casparian strip membrane proteins (CASP) family. In terms of assembly, homodimer and heterodimers. Expressed in the root endodermis and flowers.

The protein resides in the cell membrane. The polypeptide is CASP-like protein 1D2 (Arabidopsis thaliana (Mouse-ear cress)).